The chain runs to 79 residues: Putative sulfur carrier protein TM_0983 (79 aa).

The Cysteine persulfide intermediate role is filled by C17.

Belongs to the sulfur carrier protein TusA family.

This is Putative sulfur carrier protein TM_0983 from Thermotoga maritima (strain ATCC 43589 / DSM 3109 / JCM 10099 / NBRC 100826 / MSB8).